Consider the following 438-residue polypeptide: Trigger factor (438 aa).

One can recognise a PPIase FKBP-type domain in the interval 160–245; the sequence is DDKVVIDFVG…VKKIQEAQLP (86 aa).

This sequence belongs to the FKBP-type PPIase family. Tig subfamily.

The protein resides in the cytoplasm. The catalysed reaction is [protein]-peptidylproline (omega=180) = [protein]-peptidylproline (omega=0). Functionally, involved in protein export. Acts as a chaperone by maintaining the newly synthesized protein in an open conformation. Functions as a peptidyl-prolyl cis-trans isomerase. In Francisella philomiragia subsp. philomiragia (strain ATCC 25017 / CCUG 19701 / FSC 153 / O#319-036), this protein is Trigger factor.